The primary structure comprises 174 residues: Squamosa promoter-binding-like protein 4 (174 aa).

Residues 1–42 (MEGKRSQGQGYMKKKSYLVEEDMETDTDEEEEVGRDRVRGSR) are disordered. Over residues 19-33 (VEEDMETDTDEEEEV) the composition is skewed to acidic residues. The SBP-type zinc-finger motif lies at 51-128 (LRLCQVDRCT…AGHNERRRKS (78 aa)). Zn(2+)-binding residues include C54, C59, C76, H79, C95, C98, H102, and C114. The Bipartite nuclear localization signal signature appears at 111 to 127 (KRSCRRRLAGHNERRRK). The span at 118–127 (LAGHNERRRK) shows a compositional bias: basic residues. 2 disordered regions span residues 118 to 148 (LAGH…GQVV) and 155 to 174 (SRVE…PQIR). The segment covering 163-174 (MPNSSFKRPQIR) has biased composition (polar residues).

It depends on Zn(2+) as a cofactor. As to expression, expressed in the rib meristem and inter-primordial tissue of the inflorescence apex.

The protein resides in the nucleus. Its subcellular location is the cytoplasm. Functionally, trans-acting factor that binds specifically to the consensus nucleotide sequence 5'-TNCGTACAA-3' of AP1 promoter. Promotes both vegetative phase change and flowering. This chain is Squamosa promoter-binding-like protein 4 (SPL4), found in Arabidopsis thaliana (Mouse-ear cress).